The following is a 168-amino-acid chain: Pleiotrophin (168 aa).

A signal peptide spans 1-32 (MSSQQYQQQRRKFAAAFLALIFILAAVDTAEA). 5 cysteine pairs are disulfide-bonded: C47–C76, C55–C85, C62–C89, C99–C131, and C109–C141. Chondroitin sulfate binding stretches follow at residues 92 to 99 (KKQFGAEC) and 123 to 131 (KRALHNADC). The interval 139-168 (KPCGKLTKPKPQAESKKKKKEGKKQEKMLD) is disordered. The interval 147–168 (PKPQAESKKKKKEGKKQEKMLD) is chondroitin sulfate A binding.

It belongs to the pleiotrophin family. As to quaternary structure, interacts with ALK and NEK6. Interacts with PTPRZ1 (via chondroitin sulfate groups); promotes formation of homooligomers; oligomerization impairs tyrosine phosphatase activity. Forms a complex with PTPRZ1 and CTNNB1; this complex inactivates PTPRZ1 protein tyrosine phosphatase activity through PTN interaction and stimulates tyrosine phosphorylation of CTNNB1. Interacts with ITGB3 and ITGA5. Forms a complex with PTPRZ1 and integrin alpha-V/beta-3 (ITGAV:ITGB3) that stimulates endothelial cell migration through ITGB3 'Tyr-773' phosphorylation. Interacts with SDC3 (via heparan sulfate chains); this interaction mediates the neurite outgrowth-promoting signal from PTN to the cytoskeleton of growing neurites; this interaction mediates osteoblast recruitment. Interacts with GPC2 (via heparan sulfate); this interaction promotes neurite outgrowth through binding of PTN with chondroitin sulfate of proteoglycans, thereby releasing PTPRS of chondroitin sulfate proteoglycans (CSPGs) and leading to binding with heparan sulfate of GPC2. In terms of processing, phosphorylated by NEK6. In terms of tissue distribution, osteoblast and brain. Expressed in the follicular epithelium and granulosa cells of the ovary. Strongly expressed in the uterus of newborn mice, and the degree of expression decreased in one-week-old mice, although the expression continues even in the uteri of adult mice. Expression gradually increases from proestrus to estrus, then decreases sharply, and thereafter gradually increased again. strongly expressed in the cochlea of WT mice 1 week after birth, and then the expression decreased and was undetectable by week 8 after birth. Expressed around the cell soma of osteocytes and apparently captured in the unmineralized interstitial matrix surrounding the cells. Furthermore distributed throughout the intraosseous canalicular porosity, being localized in the unmineralized matrix around the cell processes. Strongly expressed in the innermost layer of the periosteum.

It localises to the secreted. In terms of biological role, secreted growth factor that mediates its signal through cell-surface proteoglycan and non-proteoglycan receptors. Binds cell-surface proteoglycan receptor via their chondroitin sulfate (CS) groups. Thereby regulates many processes like cell proliferation, cell survival, cell growth, cell differentiation and cell migration in several tissues namely neuron and bone. Also plays a role in synaptic plasticity and learning-related behavior by inhibiting long-term synaptic potentiation. Binds PTPRZ1, leading to neutralization of the negative charges of the CS chains of PTPRZ1, inducing PTPRZ1 clustering, thereby causing the dimerization and inactivation of its phosphatase activity leading to increased tyrosine phosphorylation of each of the PTPRZ1 substrates like ALK or AFAP1L2 in order to activate the PI3K-AKT pathway. Through PTPRZ1 binding controls oligodendrocyte precursor cell differentiation by enhancing the phosphorylation of AFAP1L2 in order to activate the PI3K-AKT pathway. Forms a complex with PTPRZ1 and integrin alpha-V/beta-3 (ITGAV:ITGB3) that stimulates endothelial cell migration through SRC dephosphorylation and activation that consequently leads to ITGB3 'Tyr-773' phosphorylation. In adult hippocampus promotes dendritic arborization, spine development, and functional integration and connectivity of newborn granule neurons through ALK by activating AKT signaling pathway. Binds GPC2 and chondroitin sulfate proteoglycans (CSPGs) at the neuron surface, leading to abrogation of binding between PTPRS and CSPGs and neurite outgrowth promotion. Binds SDC3 and mediates bone formation by recruiting and attaching osteoblasts/osteoblast precursors to the sites for new bone deposition. Binds ALK and promotes cell survival and cell proliferation through MAPK pathway activation. Inhibits proliferation and enhances differentiation of neural stem cells by inhibiting FGF2-induced fibroblast growth factor receptor signaling pathway. Mediates regulatory mechanisms in normal hemostasis and in hematopoietic regeneration and in maintaining the balance of myeloid and lymphoid regeneration. In addition may play a role in the female reproductive system, auditory response and the progesterone-induced decidualization pathway. This Mus musculus (Mouse) protein is Pleiotrophin.